The primary structure comprises 330 residues: Putative zinc finger protein CONSTANS-LIKE 11 (330 aa).

Residues C5, C8, C28, and H33 each contribute to the Zn(2+) site. The B box-type 1; atypical zinc finger occupies 5 to 47; that stretch reads CDFCGTEKALIYCKSDSAKLCLNCDVNVHSANPLSQRHTRSLL. The B box-type 2; degenerate zinc-finger motif lies at 48 to 88; sequence CEKCSLQPTAVHCMNENVSLCQGCQWTASNCTGLGHRLQSL. Positions 276 to 318 constitute a CCT domain; the sequence is RDEAKKRYKQKKSKRMFGKQIRYASRKARADTRKRVKGRFVKS.

It belongs to the CONSTANS family.

The protein resides in the nucleus. The sequence is that of Putative zinc finger protein CONSTANS-LIKE 11 (COL11) from Arabidopsis thaliana (Mouse-ear cress).